The following is a 396-amino-acid chain: Elongation factor Tu (396 aa).

The 197-residue stretch at 10-206 (KPHVNVGTIG…ALDSYIPEPE (197 aa)) folds into the tr-type G domain. The segment at 19–26 (GHVDHGKT) is G1. Residue 19-26 (GHVDHGKT) coordinates GTP. Thr26 provides a ligand contact to Mg(2+). Residues 60 to 64 (GITIN) form a G2 region. Residues 81–84 (DCPG) form a G3 region. GTP contacts are provided by residues 81-85 (DCPGH) and 136-139 (NKCD). Residues 136–139 (NKCD) form a G4 region. The G5 stretch occupies residues 174–176 (SAL).

It belongs to the TRAFAC class translation factor GTPase superfamily. Classic translation factor GTPase family. EF-Tu/EF-1A subfamily. Monomer.

Its subcellular location is the cytoplasm. The catalysed reaction is GTP + H2O = GDP + phosphate + H(+). Functionally, GTP hydrolase that promotes the GTP-dependent binding of aminoacyl-tRNA to the A-site of ribosomes during protein biosynthesis. This Acinetobacter baumannii (strain ATCC 17978 / DSM 105126 / CIP 53.77 / LMG 1025 / NCDC KC755 / 5377) protein is Elongation factor Tu.